The primary structure comprises 147 residues: Sec-independent protein translocase protein TatB (147 aa).

The helical transmembrane segment at 1–21 (MFDVSFTELMVIGVIALVVIG) threads the bilayer. The interval 67 to 147 (DETARSMQTS…DKTPPTGSAT (81 aa)) is disordered. The span at 93–103 (AELDDTARDAS) shows a compositional bias: basic and acidic residues. Low complexity-rich tracts occupy residues 109–120 (ADAPAEPAPAVA) and 129–147 (APPA…GSAT).

This sequence belongs to the TatB family. As to quaternary structure, the Tat system comprises two distinct complexes: a TatABC complex, containing multiple copies of TatA, TatB and TatC subunits, and a separate TatA complex, containing only TatA subunits. Substrates initially bind to the TatABC complex, which probably triggers association of the separate TatA complex to form the active translocon.

The protein localises to the cell inner membrane. Part of the twin-arginine translocation (Tat) system that transports large folded proteins containing a characteristic twin-arginine motif in their signal peptide across membranes. Together with TatC, TatB is part of a receptor directly interacting with Tat signal peptides. TatB may form an oligomeric binding site that transiently accommodates folded Tat precursor proteins before their translocation. The polypeptide is Sec-independent protein translocase protein TatB (Bordetella pertussis (strain Tohama I / ATCC BAA-589 / NCTC 13251)).